The chain runs to 402 residues: 26S proteasome regulatory subunit 8 (402 aa).

186 to 193 (GPPGTGKT) is an ATP binding site.

The protein belongs to the AAA ATPase family.

The protein localises to the cytoplasm. The protein resides in the nucleus. In terms of biological role, the 26S proteasome is involved in the ATP-dependent degradation of ubiquitinated proteins. The regulatory (or ATPase) complex confers ATP dependency and substrate specificity to the 26S complex. This Manduca sexta (Tobacco hawkmoth) protein is 26S proteasome regulatory subunit 8.